Here is a 593-residue protein sequence, read N- to C-terminus: RNA-binding protein 47 (593 aa).

Residues 1-20 (MTAEDSTAAMSSDSAAGSSA) are compositionally biased toward low complexity. The tract at residues 1–25 (MTAEDSTAAMSSDSAAGSSAKVPEG) is disordered. 3 consecutive RRM domains span residues 71 to 149 (CEVF…CSVD), 151 to 233 (CRLF…WAEP), and 246 to 318 (KILY…LAKP). Arg-332 carries the post-translational modification Omega-N-methylarginine. An asymmetric dimethylarginine; alternate mark is found at Arg-394 and Arg-405. Omega-N-methylarginine; alternate occurs at positions 394 and 405.

Belongs to the RRM RBM47 family. Homodimer. Interacts with A1CF. Interacts with APOBEC1; form an mRNA editing complex. Interacts with RBPMS.

Its subcellular location is the nucleus. It is found in the cytoplasm. Single-stranded RNA-binding protein that functions in a variety of RNA processes, including alternative splicing, RNA stabilization, and RNA editing. Functions as an enzyme-substrate adapter for the cytidine deaminase APOBEC1. With APOBEC1 forms an mRNA editing complex involved into cytidine to uridine editing of a variety of mRNA molecules. Through the binding of their 3'UTR, also stabilizes a variety of mRNAs and regulates the expression of genes such as the interferon alpha/beta receptor and interleukin-10. Also involved in the alternative splicing of several genes including TJP1. Binds the pre-mRNA (U)GCAUG consensus sequences in downstream intronic regions of alternative exons, regulating their exclusion and inclusion into mRNAs. Independently of its RNA-binding activity, could negatively regulate MAVS by promoting its lysosomal degradation. The polypeptide is RNA-binding protein 47 (Homo sapiens (Human)).